Consider the following 234-residue polypeptide: MSNQLIYTGKAKDIYTTEDEHVIKSVYKDQATMLNGARKETIVGKGVLNNKISSLIFEKLNEAGVATHFIKKLSDTEQLNKKVDIIPLEVVLRNVTAGSFAKRFGIVEGILLDTPIVEFYYKKDELDDPFINDEHVLFLKIADEKQIAYIKEETLRINQLLKGWFQQIDLQLIDFKLEFGFDKDGNIILADEFSPDNCRLWDKDGNHMDKDVFRRDLGNLTAVYQIVLEKLEQL.

Belongs to the SAICAR synthetase family.

The enzyme catalyses 5-amino-1-(5-phospho-D-ribosyl)imidazole-4-carboxylate + L-aspartate + ATP = (2S)-2-[5-amino-1-(5-phospho-beta-D-ribosyl)imidazole-4-carboxamido]succinate + ADP + phosphate + 2 H(+). It functions in the pathway purine metabolism; IMP biosynthesis via de novo pathway; 5-amino-1-(5-phospho-D-ribosyl)imidazole-4-carboxamide from 5-amino-1-(5-phospho-D-ribosyl)imidazole-4-carboxylate: step 1/2. This chain is Phosphoribosylaminoimidazole-succinocarboxamide synthase, found in Streptococcus uberis (strain ATCC BAA-854 / 0140J).